We begin with the raw amino-acid sequence, 249 residues long: Putative S-adenosyl-L-methionine-dependent methyltransferase Mjls_0570 (249 aa).

Residues D111 and 141–142 (DL) each bind S-adenosyl-L-methionine.

This sequence belongs to the UPF0677 family.

Exhibits S-adenosyl-L-methionine-dependent methyltransferase activity. This Mycobacterium sp. (strain JLS) protein is Putative S-adenosyl-L-methionine-dependent methyltransferase Mjls_0570.